A 233-amino-acid chain; its full sequence is Small ribosomal subunit protein uS5 (233 aa).

Composition is skewed to basic and acidic residues over residues 1–12 (MANESEIQKTEN) and 39–54 (RGRD…RNEE). The tract at residues 1–54 (MANESEIQKTENAEVANAANGTNPNNERRGRGGRGRGGRGRDGRGRRDDRRNEE) is disordered. The S5 DRBM domain maps to 59 to 122 (LIEKLVHINR…AAAKKTMIRV (64 aa)).

The protein belongs to the universal ribosomal protein uS5 family. Part of the 30S ribosomal subunit. Contacts proteins S4 and S8.

Its function is as follows. With S4 and S12 plays an important role in translational accuracy. Located at the back of the 30S subunit body where it stabilizes the conformation of the head with respect to the body. The chain is Small ribosomal subunit protein uS5 from Zymomonas mobilis subsp. mobilis (strain ATCC 31821 / ZM4 / CP4).